The sequence spans 296 residues: GTP-binding protein GEM (296 aa).

2 disordered regions span residues 1–20 (MTLN…PQQQ) and 37–68 (PHQY…SVIS). Residues 57–68 (SWSSDSTDSVIS) are compositionally biased toward low complexity. Residues 82-89 (GEQGVGKS) and 191-194 (NKSD) contribute to the GTP site. Residues 266–285 (ARRFWGKIVAKNNKNMAFKL) form a calmodulin-binding region.

It belongs to the small GTPase superfamily. RGK family. As to quaternary structure, interacts with calmodulin in a Ca(2+)-dependent manner. Binds ROCK1. Phosphorylated on tyrosine residues.

It localises to the cell membrane. Its function is as follows. Could be a regulatory protein, possibly participating in receptor-mediated signal transduction at the plasma membrane. Has guanine nucleotide-binding activity but undetectable intrinsic GTPase activity. This is GTP-binding protein GEM (GEM) from Pongo abelii (Sumatran orangutan).